The sequence spans 1767 residues: Endo-alpha-N-acetylgalactosaminidase (1767 aa).

The signal sequence occupies residues 1–39 (MNKGLFEKRCKYSIRKFSLGVASVMIGATFFGTSPVLAD). Composition is skewed to basic and acidic residues over residues 63–75 (NDGHDFEAPKVGE) and 84–111 (DGPKTEEELLALEKEKPAEEKPKEDKPA). 2 disordered regions span residues 63-137 (NDGH…QGTV) and 301-324 (VKTDNQEGVKTEDTPAEKETGPEV). A compositionally biased stretch (low complexity) spans 112-124 (AAKPETPKTVTPE). 2 stretches are compositionally biased toward basic and acidic residues: residues 127–137 (TVEKKEQQGTV) and 304–324 (DNQEGVKTEDTPAEKETGPEV). Ca(2+)-binding residues include Asp577, Asn579, Asp581, Lys583, and Asp588. A catalytic region spans residues 602–893 (GWKKVKDITA…DVMTKYFQHF (292 aa)). Asp658 contributes to the substrate binding site. Asp764 serves as the catalytic Nucleophile. Glu796 acts as the Proton donor/acceptor in catalysis. The Ca(2+) site is built by Asp1233, Glu1235, Glu1281, Trp1284, and Asp1411. Residues 1735-1739 (LPATG) carry the LPXTG sorting signal motif. The residue at position 1738 (Thr1738) is a Pentaglycyl murein peptidoglycan amidated threonine. Residues 1739-1767 (GESQFDTALFLASVSLALSALFVVKTKKD) constitute a propeptide, removed by sortase.

Belongs to the glycosyl hydrolase 101 family. A subfamily.

Its subcellular location is the secreted. It is found in the cell wall. The catalysed reaction is a 3-O-[beta-D-galactosyl-(1-&gt;3)-N-acetyl-alpha-D-galactosaminyl]-L-threonyl-[protein] + H2O = beta-D-galactosyl-(1-&gt;3)-N-acetyl-D-galactosamine + L-threonyl-[protein]. The enzyme catalyses a 3-O-[beta-D-galactosyl-(1-&gt;3)-N-acetyl-alpha-D-galactosaminyl]-L-seryl-[protein] + H2O = beta-D-galactosyl-(1-&gt;3)-N-acetyl-D-galactosamine + L-seryl-[protein]. Involved in the breakdown of mucin-type O-linked glycans. Specifically removes the T-antigen disaccharide (Gal-beta-1,3-GalNAc-alpha) from extracellular host glycoproteins. Representative of a broadly important class of virulence factors. This Streptococcus pneumoniae (strain ATCC BAA-255 / R6) protein is Endo-alpha-N-acetylgalactosaminidase.